The chain runs to 38 residues: Large ribosomal subunit protein bL36 (38 aa).

It belongs to the bacterial ribosomal protein bL36 family.

The protein is Large ribosomal subunit protein bL36 of Saccharophagus degradans (strain 2-40 / ATCC 43961 / DSM 17024).